The primary structure comprises 456 residues: Bifunctional protein GlmU (456 aa).

A pyrophosphorylase region spans residues 1–230; that stretch reads MDKRFAVILA…FQETLGVNDR (230 aa). UDP-N-acetyl-alpha-D-glucosamine-binding positions include 9–12, K23, Q73, and 78–79; these read LAAG and GT. D103 contacts Mg(2+). The UDP-N-acetyl-alpha-D-glucosamine site is built by G140, E155, N170, and N228. Residue N228 participates in Mg(2+) binding. Residues 231-251 are linker; sequence VALSQAEMYMKERINKRHMQN. The interval 252 to 456 is N-acetyltransferase; that stretch reads GVTLIDPMNT…EDYVKNIHKK (205 aa). 2 residues coordinate UDP-N-acetyl-alpha-D-glucosamine: R333 and K351. H363 (proton acceptor) is an active-site residue. Y366 and N377 together coordinate UDP-N-acetyl-alpha-D-glucosamine. Acetyl-CoA-binding positions include 386–387, A423, and R440; that span reads NY.

It in the N-terminal section; belongs to the N-acetylglucosamine-1-phosphate uridyltransferase family. This sequence in the C-terminal section; belongs to the transferase hexapeptide repeat family. As to quaternary structure, homotrimer. Requires Mg(2+) as cofactor.

The protein localises to the cytoplasm. It catalyses the reaction alpha-D-glucosamine 1-phosphate + acetyl-CoA = N-acetyl-alpha-D-glucosamine 1-phosphate + CoA + H(+). The enzyme catalyses N-acetyl-alpha-D-glucosamine 1-phosphate + UTP + H(+) = UDP-N-acetyl-alpha-D-glucosamine + diphosphate. The protein operates within nucleotide-sugar biosynthesis; UDP-N-acetyl-alpha-D-glucosamine biosynthesis; N-acetyl-alpha-D-glucosamine 1-phosphate from alpha-D-glucosamine 6-phosphate (route II): step 2/2. It participates in nucleotide-sugar biosynthesis; UDP-N-acetyl-alpha-D-glucosamine biosynthesis; UDP-N-acetyl-alpha-D-glucosamine from N-acetyl-alpha-D-glucosamine 1-phosphate: step 1/1. It functions in the pathway bacterial outer membrane biogenesis; LPS lipid A biosynthesis. In terms of biological role, catalyzes the last two sequential reactions in the de novo biosynthetic pathway for UDP-N-acetylglucosamine (UDP-GlcNAc). The C-terminal domain catalyzes the transfer of acetyl group from acetyl coenzyme A to glucosamine-1-phosphate (GlcN-1-P) to produce N-acetylglucosamine-1-phosphate (GlcNAc-1-P), which is converted into UDP-GlcNAc by the transfer of uridine 5-monophosphate (from uridine 5-triphosphate), a reaction catalyzed by the N-terminal domain. The chain is Bifunctional protein GlmU from Bacillus velezensis (strain DSM 23117 / BGSC 10A6 / LMG 26770 / FZB42) (Bacillus amyloliquefaciens subsp. plantarum).